The following is a 230-amino-acid chain: Octanoyltransferase (230 aa).

Residues Pro31–Pro230 enclose the BPL/LPL catalytic domain. Substrate contacts are provided by residues Arg70–His77, Ala163–Gly165, and Gly176–Ala178. Cys194 (acyl-thioester intermediate) is an active-site residue.

It belongs to the LipB family.

Its subcellular location is the cytoplasm. It carries out the reaction octanoyl-[ACP] + L-lysyl-[protein] = N(6)-octanoyl-L-lysyl-[protein] + holo-[ACP] + H(+). It functions in the pathway protein modification; protein lipoylation via endogenous pathway; protein N(6)-(lipoyl)lysine from octanoyl-[acyl-carrier-protein]: step 1/2. In terms of biological role, catalyzes the transfer of endogenously produced octanoic acid from octanoyl-acyl-carrier-protein onto the lipoyl domains of lipoate-dependent enzymes. Lipoyl-ACP can also act as a substrate although octanoyl-ACP is likely to be the physiological substrate. In Albidiferax ferrireducens (strain ATCC BAA-621 / DSM 15236 / T118) (Rhodoferax ferrireducens), this protein is Octanoyltransferase.